The following is a 256-amino-acid chain: Small ribosomal subunit protein uS2 (256 aa).

It belongs to the universal ribosomal protein uS2 family.

The chain is Small ribosomal subunit protein uS2 from Geotalea uraniireducens (strain Rf4) (Geobacter uraniireducens).